Here is a 560-residue protein sequence, read N- to C-terminus: Vacuolar protein 8 (560 aa).

Residue glycine 2 is the site of N-myristoyl glycine attachment. The S-palmitoyl cysteine moiety is linked to residue cysteine 4. ARM repeat units follow at residues 39–76 (NRAE…FAEI), 77–116 (TERD…NLAV), 118–157 (TDNK…NLAT), 159–198 (EENK…NMTH), 200–239 (DENR…NIAV), 243–282 (NRRK…NLAS), 284–323 (EKYQ…NISI), 325–365 (PQNE…NLAA), and 409–448 (DELK…NLSS).

The protein belongs to the beta-catenin family.

Its subcellular location is the vacuole membrane. Functionally, functions in both vacuole inheritance and protein targeting from the cytoplasm to vacuole. The sequence is that of Vacuolar protein 8 (VAC8) from Chaetomium globosum (strain ATCC 6205 / CBS 148.51 / DSM 1962 / NBRC 6347 / NRRL 1970) (Soil fungus).